Reading from the N-terminus, the 285-residue chain is Cyclin-Y-like protein 1B (285 aa).

The 99-residue stretch at 111–209 folds into the Cyclin N-terminal domain; the sequence is PKRNCIFRHF…CFLELLEFNI (99 aa).

It belongs to the cyclin family. Cyclin Y subfamily.

This Homo sapiens (Human) protein is Cyclin-Y-like protein 1B.